The sequence spans 361 residues: Chorismate synthase (361 aa).

NADP(+) contacts are provided by Arg-48 and Arg-54. Residues 125 to 127 (RSS), 238 to 239 (NA), Gly-278, 293 to 297 (KPTSS), and Arg-319 each bind FMN.

It belongs to the chorismate synthase family. In terms of assembly, homotetramer. FMNH2 is required as a cofactor.

It catalyses the reaction 5-O-(1-carboxyvinyl)-3-phosphoshikimate = chorismate + phosphate. The protein operates within metabolic intermediate biosynthesis; chorismate biosynthesis; chorismate from D-erythrose 4-phosphate and phosphoenolpyruvate: step 7/7. Catalyzes the anti-1,4-elimination of the C-3 phosphate and the C-6 proR hydrogen from 5-enolpyruvylshikimate-3-phosphate (EPSP) to yield chorismate, which is the branch point compound that serves as the starting substrate for the three terminal pathways of aromatic amino acid biosynthesis. This reaction introduces a second double bond into the aromatic ring system. The sequence is that of Chorismate synthase from Proteus mirabilis (strain HI4320).